The primary structure comprises 327 residues: Phenylalanine--tRNA ligase alpha subunit (327 aa).

A Mg(2+)-binding site is contributed by glutamate 252.

The protein belongs to the class-II aminoacyl-tRNA synthetase family. Phe-tRNA synthetase alpha subunit type 1 subfamily. Tetramer of two alpha and two beta subunits. The cofactor is Mg(2+).

It localises to the cytoplasm. The catalysed reaction is tRNA(Phe) + L-phenylalanine + ATP = L-phenylalanyl-tRNA(Phe) + AMP + diphosphate + H(+). In Vibrio vulnificus (strain CMCP6), this protein is Phenylalanine--tRNA ligase alpha subunit.